The chain runs to 469 residues: Glutamate--tRNA ligase 2 (469 aa).

The 'HIGH' region signature appears at 8-18 (PSPTGFLHVGG). The 'KMSKS' region motif lies at 250–254 (KLSKR). Lys253 contacts ATP.

It belongs to the class-I aminoacyl-tRNA synthetase family. Glutamate--tRNA ligase type 1 subfamily. In terms of assembly, monomer.

Its subcellular location is the cytoplasm. The enzyme catalyses tRNA(Glu) + L-glutamate + ATP = L-glutamyl-tRNA(Glu) + AMP + diphosphate. Its function is as follows. Catalyzes the attachment of glutamate to tRNA(Glu) in a two-step reaction: glutamate is first activated by ATP to form Glu-AMP and then transferred to the acceptor end of tRNA(Glu). The protein is Glutamate--tRNA ligase 2 of Thermotoga petrophila (strain ATCC BAA-488 / DSM 13995 / JCM 10881 / RKU-1).